The chain runs to 309 residues: 4-diphosphocytidyl-2-C-methyl-D-erythritol kinase (309 aa).

The active site involves lysine 11. 94 to 104 contacts ATP; sequence PVAAGLAGGSA. Residue aspartate 136 is part of the active site.

Belongs to the GHMP kinase family. IspE subfamily.

The enzyme catalyses 4-CDP-2-C-methyl-D-erythritol + ATP = 4-CDP-2-C-methyl-D-erythritol 2-phosphate + ADP + H(+). The protein operates within isoprenoid biosynthesis; isopentenyl diphosphate biosynthesis via DXP pathway; isopentenyl diphosphate from 1-deoxy-D-xylulose 5-phosphate: step 3/6. In terms of biological role, catalyzes the phosphorylation of the position 2 hydroxy group of 4-diphosphocytidyl-2C-methyl-D-erythritol. This is 4-diphosphocytidyl-2-C-methyl-D-erythritol kinase from Synechococcus sp. (strain JA-3-3Ab) (Cyanobacteria bacterium Yellowstone A-Prime).